The chain runs to 239 residues: tRNA (guanine-N(7)-)-methyltransferase (239 aa).

S-adenosyl-L-methionine contacts are provided by Glu-69, Glu-94, Asp-121, and Asp-144. Residue Asp-144 is part of the active site. Residues Lys-148, Asp-180, and 217 to 220 (TKFE) contribute to the substrate site.

It belongs to the class I-like SAM-binding methyltransferase superfamily. TrmB family. As to quaternary structure, monomer.

It catalyses the reaction guanosine(46) in tRNA + S-adenosyl-L-methionine = N(7)-methylguanosine(46) in tRNA + S-adenosyl-L-homocysteine. It participates in tRNA modification; N(7)-methylguanine-tRNA biosynthesis. In terms of biological role, catalyzes the formation of N(7)-methylguanine at position 46 (m7G46) in tRNA. The chain is tRNA (guanine-N(7)-)-methyltransferase from Buchnera aphidicola subsp. Acyrthosiphon pisum (strain 5A).